A 454-amino-acid polypeptide reads, in one-letter code: Ornithine aminotransferase (454 aa).

Pyridoxal 5'-phosphate contacts are provided by Gly124, Thr125, and Gln267. The residue at position 293 (Lys293) is an N6-(pyridoxal phosphate)lysine. Thr321 contributes to the pyridoxal 5'-phosphate binding site.

This sequence belongs to the class-III pyridoxal-phosphate-dependent aminotransferase family. In terms of assembly, homotetramer; dimer of dimers. Pyridoxal 5'-phosphate is required as a cofactor.

It carries out the reaction L-ornithine + 2-oxoglutarate = L-glutamate 5-semialdehyde + L-glutamate. The enzyme catalyses L-lysine + 2-oxoglutarate = (S)-2-amino-6-oxohexanoate + L-glutamate. Catalyzes the conversion of L-ornithine and 2-oxoglutarate to L-glutamate semialdehyde and L-glutamate. L-ornithine is the best substrate, but the enzyme also shows good activity toward L-lysine, and low activity toward D-ornithine, D-lysine, 5-aminovalerate, 6-aminohexanoate and GABA. The enzyme activity is specific for 2-oxoglutarate. In Pyrococcus horikoshii (strain ATCC 700860 / DSM 12428 / JCM 9974 / NBRC 100139 / OT-3), this protein is Ornithine aminotransferase.